A 465-amino-acid chain; its full sequence is Glutamate--tRNA ligase (465 aa).

Positions 11 to 21 (PSPTGFIHLGN) match the 'HIGH' region motif. The 'KMSKS' region signature appears at 243 to 247 (KMSKR). An ATP-binding site is contributed by K246.

The protein belongs to the class-I aminoacyl-tRNA synthetase family. Glutamate--tRNA ligase type 1 subfamily. In terms of assembly, monomer.

It is found in the cytoplasm. The enzyme catalyses tRNA(Glu) + L-glutamate + ATP = L-glutamyl-tRNA(Glu) + AMP + diphosphate. Functionally, catalyzes the attachment of glutamate to tRNA(Glu) in a two-step reaction: glutamate is first activated by ATP to form Glu-AMP and then transferred to the acceptor end of tRNA(Glu). The polypeptide is Glutamate--tRNA ligase (Cupriavidus metallidurans (strain ATCC 43123 / DSM 2839 / NBRC 102507 / CH34) (Ralstonia metallidurans)).